Consider the following 570-residue polypeptide: Repressible high-affinity phosphate permease (570 aa).

At 1-61 (MSTPQKTAGG…AVAGVGFFTD (61 aa)) the chain is on the cytoplasmic side. Residues 62–82 (SYDIFTVSLLTLMLGIVYFPG) form a helical membrane-spanning segment. Residues 83 to 95 (EGKMPTTSDTAIK) are Extracellular-facing. The chain crosses the membrane as a helical span at residues 96–116 (LATSAGTVIGQVGFGAAADVF). Topologically, residues 117–120 (GRKS) are cytoplasmic. Residues 121–141 (MYGLELLFIIFATLAQALASG) traverse the membrane as a helical segment. The Extracellular portion of the chain corresponds to 142–143 (SP). The helical transmembrane segment at 144–164 (SINIIGIIIFWRVLMGVGIGG) threads the bilayer. Topologically, residues 165–186 (DYPLSSIITSEFATTKWRGAMM) are cytoplasmic. The chain crosses the membrane as a helical span at residues 187-207 (GAVFAMQGLGQLAAAFVMLFV). Residues 208–237 (TLGFKKSLEAAPTLASCTGDCAVAVDKMWR) are Extracellular-facing. The helical transmembrane segment at 238–258 (TVIGVGAVPGCIALYYRLTIP) threads the bilayer. Topologically, residues 259 to 325 (ETPRYTFDVK…FFRHYSKRKN (67 aa)) are cytoplasmic. Residues 326 to 346 (AMLLAGTALSWCFLDIAYYGV) form a helical membrane-spanning segment. The Extracellular segment spans residues 347-374 (SLNNATILNVIGYSTTGAKNTYEILYNT). A helical transmembrane segment spans residues 375 to 395 (AVGNLIIVLAGAVPGYWVTVF). Residues 396–403 (TVDTVGRK) lie on the Cytoplasmic side of the membrane. The chain crosses the membrane as a helical span at residues 404-424 (PIQFMGFGILTILFVVMGFAY). Residues 425-433 (KHLSPHALL) lie on the Extracellular side of the membrane. The helical transmembrane segment at 434 to 454 (AIFVLAQFFFNFGPNATTFIV) threads the bilayer. Over 455–468 (PGEVFPTRYRSTSH) the chain is Cytoplasmic. The helical transmembrane segment at 469 to 489 (GLSAAMGKIGSIIGQGAIAPL) threads the bilayer. The Extracellular portion of the chain corresponds to 490–505 (RTRGAVKGGNPNPWMN). A helical membrane pass occupies residues 506-526 (HVLEIYALFMLLGVGTTFLIP). At 527–570 (ETKRKTLEELSGEFDMSGEEEAQRDTTLTEHKTEAPTSSAAVNA) the chain is on the cytoplasmic side. Residues 537 to 546 (SGEFDMSGEE) show a composition bias toward acidic residues. Positions 537 to 570 (SGEFDMSGEEEAQRDTTLTEHKTEAPTSSAAVNA) are disordered. The span at 547–560 (EAQRDTTLTEHKTE) shows a compositional bias: basic and acidic residues. Positions 561-570 (APTSSAAVNA) are enriched in polar residues.

The protein belongs to the major facilitator superfamily. Sugar transporter (TC 2.A.1.1) family.

The protein resides in the cell membrane. With respect to regulation, phosphate transport activity is competitively inhibited by arsenate. High-affinity transporter for external inorganic phosphate. Acts probably as a H(+)-phosphate symporter. The sequence is that of Repressible high-affinity phosphate permease from Neurospora crassa (strain ATCC 24698 / 74-OR23-1A / CBS 708.71 / DSM 1257 / FGSC 987).